Here is a 202-residue protein sequence, read N- to C-terminus: Heart- and neural crest derivatives-expressed protein 1 (202 aa).

Residues 83–135 (RKGVGGPKKERRRTESINSAFAELRECIPNVPADTKLSKIKTLRLATSYIAYL) enclose the bHLH domain. Residues 143–187 (SQPGEPEGFKAELKKADGRENKRKRETQPEVYSQPLAHGEKKLKG) are disordered. A compositionally biased stretch (basic and acidic residues) spans 149–162 (EGFKAELKKADGRE).

In terms of assembly, efficient DNA binding requires dimerization with another bHLH protein.

It localises to the nucleus. Its subcellular location is the nucleoplasm. The protein localises to the nucleolus. Its function is as follows. Transcription factor. Plays an essential role in cardiac morphogenesis. The chain is Heart- and neural crest derivatives-expressed protein 1 (HAND1) from Gallus gallus (Chicken).